The chain runs to 220 residues: Chalcone--flavanone isomerase B (220 aa).

Residues threonine 50, asparagine 115, and threonine 192 each contribute to the substrate site.

The protein belongs to the chalcone isomerase family.

The catalysed reaction is a chalcone = a flavanone.. It functions in the pathway secondary metabolite biosynthesis; flavonoid biosynthesis. In terms of biological role, catalyzes the intramolecular cyclization of bicyclic chalcones into tricyclic (S)-flavanones. Responsible for the isomerization of 4,2',4',6'-tetrahydroxychalcone (also termed chalcone) into naringenin. This is Chalcone--flavanone isomerase B (CHI2) from Petunia hybrida (Petunia).